The following is a 571-amino-acid chain: Endonuclease/exonuclease/phosphatase family domain-containing protein 1 (571 aa).

Residues 1–20 (MGSTLGCHRSIPRDPSDLSH) form a disordered region. Residue Gly-2 is the site of N-myristoyl glycine attachment. Residues 11–20 (IPRDPSDLSH) show a composition bias toward basic and acidic residues. Ser-16, Ser-21, and Ser-25 each carry phosphoserine. A HhH domain is found at 38–67 (ERLNINTATEEELMTLPGVTRAVARSIVEY). Phosphoserine occurs at positions 106, 110, 162, and 175. The tract at residues 202-227 (SRPPSTHTNGGLTFTAKPHPSPTSLS) is disordered. A compositionally biased stretch (polar residues) spans 204-213 (PPSTHTNGGL). Thr-267 is subject to Phosphothreonine. Ser-430 carries the post-translational modification Phosphoserine. Residues 548 to 571 (RKEGPRSGNGLTLERSEANIKHER) form a disordered region. Basic and acidic residues predominate over residues 561-571 (ERSEANIKHER).

This chain is Endonuclease/exonuclease/phosphatase family domain-containing protein 1 (EEPD1), found in Bos taurus (Bovine).